Here is a 303-residue protein sequence, read N- to C-terminus: Glycine--tRNA ligase alpha subunit (303 aa).

Belongs to the class-II aminoacyl-tRNA synthetase family. In terms of assembly, tetramer of two alpha and two beta subunits.

The protein resides in the cytoplasm. It catalyses the reaction tRNA(Gly) + glycine + ATP = glycyl-tRNA(Gly) + AMP + diphosphate. The sequence is that of Glycine--tRNA ligase alpha subunit from Cronobacter sakazakii (strain ATCC BAA-894) (Enterobacter sakazakii).